A 147-amino-acid polypeptide reads, in one-letter code: Large ribosomal subunit protein uL15 (147 aa).

The tract at residues 1–54 is disordered; the sequence is MRLSDIKPTPGSMKKRTRVGRGIGSGKGKTSGKGHKGQKARGRGKVHPWFEGGQ. The segment covering 30–46 has biased composition (basic residues); sequence TSGKGHKGQKARGRGKV.

The protein belongs to the universal ribosomal protein uL15 family. In terms of assembly, part of the 50S ribosomal subunit.

Its function is as follows. Binds to the 23S rRNA. The protein is Large ribosomal subunit protein uL15 of Thermosipho melanesiensis (strain DSM 12029 / CIP 104789 / BI429).